The primary structure comprises 250 residues: Coproheme decarboxylase (250 aa).

Fe-coproporphyrin III is bound by residues arginine 131, 145–149 (YPMNK), histidine 172, and glutamine 185. Tyrosine 145 is an active-site residue.

Belongs to the ChdC family. Type 1 subfamily. Requires Fe-coproporphyrin III as cofactor.

The enzyme catalyses Fe-coproporphyrin III + 2 H2O2 + 2 H(+) = heme b + 2 CO2 + 4 H2O. It catalyses the reaction Fe-coproporphyrin III + H2O2 + H(+) = harderoheme III + CO2 + 2 H2O. It carries out the reaction harderoheme III + H2O2 + H(+) = heme b + CO2 + 2 H2O. The protein operates within porphyrin-containing compound metabolism; protoheme biosynthesis. Functionally, involved in coproporphyrin-dependent heme b biosynthesis. Catalyzes the decarboxylation of Fe-coproporphyrin III (coproheme) to heme b (protoheme IX), the last step of the pathway. The reaction occurs in a stepwise manner with a three-propionate intermediate. The sequence is that of Coproheme decarboxylase from Staphylococcus aureus (strain MRSA252).